The sequence spans 290 residues: 4-hydroxy-3-methylbut-2-enyl diphosphate reductase (290 aa).

Residue Cys13 coordinates [4Fe-4S] cluster. Positions 41 and 75 each coordinate (2E)-4-hydroxy-3-methylbut-2-enyl diphosphate. Residues His41 and His75 each coordinate dimethylallyl diphosphate. Positions 41 and 75 each coordinate isopentenyl diphosphate. Cys97 is a [4Fe-4S] cluster binding site. His129 contributes to the (2E)-4-hydroxy-3-methylbut-2-enyl diphosphate binding site. A dimethylallyl diphosphate-binding site is contributed by His129. Isopentenyl diphosphate is bound at residue His129. Glu131 serves as the catalytic Proton donor. Thr167 contributes to the (2E)-4-hydroxy-3-methylbut-2-enyl diphosphate binding site. A [4Fe-4S] cluster-binding site is contributed by Cys198. The (2E)-4-hydroxy-3-methylbut-2-enyl diphosphate site is built by Ser226, Ser227, Asn228, and Ser270. Ser226, Ser227, Asn228, and Ser270 together coordinate dimethylallyl diphosphate. Residues Ser226, Ser227, Asn228, and Ser270 each coordinate isopentenyl diphosphate.

It belongs to the IspH family. [4Fe-4S] cluster serves as cofactor.

It carries out the reaction isopentenyl diphosphate + 2 oxidized [2Fe-2S]-[ferredoxin] + H2O = (2E)-4-hydroxy-3-methylbut-2-enyl diphosphate + 2 reduced [2Fe-2S]-[ferredoxin] + 2 H(+). The enzyme catalyses dimethylallyl diphosphate + 2 oxidized [2Fe-2S]-[ferredoxin] + H2O = (2E)-4-hydroxy-3-methylbut-2-enyl diphosphate + 2 reduced [2Fe-2S]-[ferredoxin] + 2 H(+). It participates in isoprenoid biosynthesis; dimethylallyl diphosphate biosynthesis; dimethylallyl diphosphate from (2E)-4-hydroxy-3-methylbutenyl diphosphate: step 1/1. The protein operates within isoprenoid biosynthesis; isopentenyl diphosphate biosynthesis via DXP pathway; isopentenyl diphosphate from 1-deoxy-D-xylulose 5-phosphate: step 6/6. Its function is as follows. Catalyzes the conversion of 1-hydroxy-2-methyl-2-(E)-butenyl 4-diphosphate (HMBPP) into a mixture of isopentenyl diphosphate (IPP) and dimethylallyl diphosphate (DMAPP). Acts in the terminal step of the DOXP/MEP pathway for isoprenoid precursor biosynthesis. This Bacteroides fragilis (strain ATCC 25285 / DSM 2151 / CCUG 4856 / JCM 11019 / LMG 10263 / NCTC 9343 / Onslow / VPI 2553 / EN-2) protein is 4-hydroxy-3-methylbut-2-enyl diphosphate reductase.